The following is a 265-amino-acid chain: Phosphate import ATP-binding protein PstB (265 aa).

The ABC transporter domain occupies 18–260 (ISARDVQVFY…PEDPRTESYI (243 aa)). Residue 50–57 (GPSGCGKS) coordinates ATP.

The protein belongs to the ABC transporter superfamily. Phosphate importer (TC 3.A.1.7) family. As to quaternary structure, the complex is composed of two ATP-binding proteins (PstB), two transmembrane proteins (PstC and PstA) and a solute-binding protein (PstS).

It is found in the cell inner membrane. It catalyses the reaction phosphate(out) + ATP + H2O = ADP + 2 phosphate(in) + H(+). Part of the ABC transporter complex PstSACB involved in phosphate import. Responsible for energy coupling to the transport system. This chain is Phosphate import ATP-binding protein PstB, found in Roseobacter denitrificans (strain ATCC 33942 / OCh 114) (Erythrobacter sp. (strain OCh 114)).